Consider the following 83-residue polypeptide: Mu-theraphotoxin-Hhn2b 2 (83 aa).

The first 21 residues, 1 to 21 (MKASMFLALAGLVLLFVVCYA), serve as a signal peptide directing secretion. Positions 22 to 48 (SESEEKEFPRELISKIFTVDDFKGEER) are excised as a propeptide. Disulfide bonds link Cys-50–Cys-65, Cys-57–Cys-70, and Cys-64–Cys-77. Leu-81 carries the post-translational modification Leucine amide.

Belongs to the neurotoxin 10 (Hwtx-1) family. 14 (Hntx-1) subfamily. In terms of assembly, monomer. As to expression, expressed by the venom gland.

It localises to the secreted. Functionally, weakly blocks the rat SCN2A/SCN1B (Nav1.2/beta-1) sodium channel (IC(50)=68 uM) and the insect sodium channel para/tipE (IC(50)=4.3 uM), without altering the activation or inactivation kinetics (depressant toxin). This chain is Mu-theraphotoxin-Hhn2b 2, found in Cyriopagopus hainanus (Chinese bird spider).